We begin with the raw amino-acid sequence, 206 residues long: Large ribosomal subunit protein uL4 (206 aa).

The disordered stretch occupies residues 63 to 93 (MYKQKGTGRARHHSARAPQFRGGGKAHGPVV). Basic residues predominate over residues 64–77 (YKQKGTGRARHHSA).

This sequence belongs to the universal ribosomal protein uL4 family. Part of the 50S ribosomal subunit.

Functionally, one of the primary rRNA binding proteins, this protein initially binds near the 5'-end of the 23S rRNA. It is important during the early stages of 50S assembly. It makes multiple contacts with different domains of the 23S rRNA in the assembled 50S subunit and ribosome. Its function is as follows. Forms part of the polypeptide exit tunnel. This chain is Large ribosomal subunit protein uL4, found in Sinorhizobium fredii (strain NBRC 101917 / NGR234).